The chain runs to 126 residues: Aspartate 1-decarboxylase (126 aa).

Catalysis depends on Ser-25, which acts as the Schiff-base intermediate with substrate; via pyruvic acid. Ser-25 carries the post-translational modification Pyruvic acid (Ser). Residue Thr-57 coordinates substrate. The active-site Proton donor is Tyr-58. 73–75 (GAA) serves as a coordination point for substrate.

The protein belongs to the PanD family. In terms of assembly, heterooctamer of four alpha and four beta subunits. Pyruvate is required as a cofactor. In terms of processing, is synthesized initially as an inactive proenzyme, which is activated by self-cleavage at a specific serine bond to produce a beta-subunit with a hydroxyl group at its C-terminus and an alpha-subunit with a pyruvoyl group at its N-terminus.

It localises to the cytoplasm. It carries out the reaction L-aspartate + H(+) = beta-alanine + CO2. It functions in the pathway cofactor biosynthesis; (R)-pantothenate biosynthesis; beta-alanine from L-aspartate: step 1/1. In terms of biological role, catalyzes the pyruvoyl-dependent decarboxylation of aspartate to produce beta-alanine. This chain is Aspartate 1-decarboxylase, found in Alkalilimnicola ehrlichii (strain ATCC BAA-1101 / DSM 17681 / MLHE-1).